A 138-amino-acid chain; its full sequence is Cysteine desulfuration protein SufE (138 aa).

The active-site Cysteine persulfide intermediate is the Cys-51.

This sequence belongs to the SufE family. As to quaternary structure, homodimer. Interacts with SufS.

It is found in the cytoplasm. The protein operates within cofactor biosynthesis; iron-sulfur cluster biosynthesis. In terms of biological role, participates in cysteine desulfuration mediated by SufS. Cysteine desulfuration mobilizes sulfur from L-cysteine to yield L-alanine and constitutes an essential step in sulfur metabolism for biosynthesis of a variety of sulfur-containing biomolecules. Functions as a sulfur acceptor for SufS, by mediating the direct transfer of the sulfur atom from the S-sulfanylcysteine of SufS, an intermediate product of cysteine desulfuration process. The chain is Cysteine desulfuration protein SufE from Escherichia coli O8 (strain IAI1).